The chain runs to 311 residues: Ornithine carbamoyltransferase (311 aa).

Residues Q85, R109, and 136 to 139 (HPCQ) contribute to the carbamoyl phosphate site. Residues N167, D231, and 235–236 (SM) contribute to the L-ornithine site. Carbamoyl phosphate is bound by residues 271-272 (CL) and R299.

The protein belongs to the aspartate/ornithine carbamoyltransferase superfamily. OTCase family.

It localises to the cytoplasm. It catalyses the reaction carbamoyl phosphate + L-ornithine = L-citrulline + phosphate + H(+). Its pathway is amino-acid biosynthesis; L-arginine biosynthesis; L-arginine from L-ornithine and carbamoyl phosphate: step 1/3. Its function is as follows. Reversibly catalyzes the transfer of the carbamoyl group from carbamoyl phosphate (CP) to the N(epsilon) atom of ornithine (ORN) to produce L-citrulline. This is Ornithine carbamoyltransferase (argF) from Geobacillus stearothermophilus (Bacillus stearothermophilus).